The following is a 373-amino-acid chain: Mannan endo-1,4-beta-mannosidase A (373 aa).

An N-terminal signal peptide occupies residues 1-17; the sequence is MKGLFAFGLGLLSLVNA. Substrate-binding positions include W81, N193, and 194–196; that span reads EPR. E194 functions as the Proton donor/acceptor in the catalytic mechanism. The cysteines at positions 197 and 200 are disulfide-linked. Positions 230, 267, and 271 each coordinate substrate. C289 and C296 form a disulfide bridge. The active-site Nucleophile is E300. A disulfide bond links C308 and C359. W332 serves as a coordination point for substrate.

It belongs to the glycosyl hydrolase 5 (cellulase A) family. As to quaternary structure, monomer. Post-translationally, not glycosylated.

It localises to the secreted. The enzyme catalyses Random hydrolysis of (1-&gt;4)-beta-D-mannosidic linkages in mannans, galactomannans and glucomannans.. Its function is as follows. Endo-1,4-mannanase that catalyzes the random hydrolysis of (1-&gt;4)-beta-D-mannosidic linkages in mannans and heteromannans. It is a crucial enzyme for depolymerization of seed galactomannans and wood galactoglucomannans. Hydrolyzes structurally different mannan polysaccharides, such as galactomannans, glucomannans, and beta-1,4-mannans from different sources, yielding principally mannobiose. Also has transglycosylation activity. The protein is Mannan endo-1,4-beta-mannosidase A of Podospora anserina (strain S / ATCC MYA-4624 / DSM 980 / FGSC 10383) (Pleurage anserina).